The following is a 20-amino-acid chain: Styelin-A (20 aa).

In terms of tissue distribution, hemocytes and pharyngeal tissues.

The protein localises to the secreted. Its function is as follows. Bactericidal against several Gram-positive and Gram-negative bacteria. The protein is Styelin-A of Styela clava (Sea squirt).